The primary structure comprises 85 residues: DNA-directed RNA polymerase subunit omega (85 aa).

Belongs to the RNA polymerase subunit omega family. In terms of assembly, the RNAP catalytic core consists of 2 alpha, 1 beta, 1 beta' and 1 omega subunit. When a sigma factor is associated with the core the holoenzyme is formed, which can initiate transcription.

It carries out the reaction RNA(n) + a ribonucleoside 5'-triphosphate = RNA(n+1) + diphosphate. Functionally, promotes RNA polymerase assembly. Latches the N- and C-terminal regions of the beta' subunit thereby facilitating its interaction with the beta and alpha subunits. This is DNA-directed RNA polymerase subunit omega from Latilactobacillus sakei subsp. sakei (strain 23K) (Lactobacillus sakei subsp. sakei).